A 312-amino-acid polypeptide reads, in one-letter code: MRLVFAGTPEFARIALDALLAAGHDVPLVLTQPDRPAGRGLKLTPSPVKQAALAAGIEVAQPRSLRLDGRYPDEAAAARAQLERVAPDVMVVAAYGLILPQWTLDLPRLGCLNIHASLLPRWRGAAPIQRAIEAGDAETGVTIMQMDAGLDTGDMLLERAVPIGAQQTAAQLHDELARVGGQAIVDALAALAQGGLAPRRQPDAGVTYAAKLYKAEAALDCSLPAAVLARRVRAFNPVPGATIRLPGLDDPVKVWRAQALEQAAGGTSGAVLRADAQGIDIATGQGVLRLLELQKAGGKRQPVDVFVRGWQP.

117–120 (SLLP) contributes to the (6S)-5,6,7,8-tetrahydrofolate binding site.

It belongs to the Fmt family.

The enzyme catalyses L-methionyl-tRNA(fMet) + (6R)-10-formyltetrahydrofolate = N-formyl-L-methionyl-tRNA(fMet) + (6S)-5,6,7,8-tetrahydrofolate + H(+). In terms of biological role, attaches a formyl group to the free amino group of methionyl-tRNA(fMet). The formyl group appears to play a dual role in the initiator identity of N-formylmethionyl-tRNA by promoting its recognition by IF2 and preventing the misappropriation of this tRNA by the elongation apparatus. The chain is Methionyl-tRNA formyltransferase from Bordetella pertussis (strain Tohama I / ATCC BAA-589 / NCTC 13251).